The primary structure comprises 111 residues: Phosphoribosyl-AMP cyclohydrolase (111 aa).

Asp-80 is a binding site for Mg(2+). Cys-81 lines the Zn(2+) pocket. Mg(2+) contacts are provided by Asp-82 and Asp-84. Cys-97 and Cys-104 together coordinate Zn(2+).

Belongs to the PRA-CH family. Homodimer. Requires Mg(2+) as cofactor. It depends on Zn(2+) as a cofactor.

Its subcellular location is the cytoplasm. The catalysed reaction is 1-(5-phospho-beta-D-ribosyl)-5'-AMP + H2O = 1-(5-phospho-beta-D-ribosyl)-5-[(5-phospho-beta-D-ribosylamino)methylideneamino]imidazole-4-carboxamide. It functions in the pathway amino-acid biosynthesis; L-histidine biosynthesis; L-histidine from 5-phospho-alpha-D-ribose 1-diphosphate: step 3/9. Functionally, catalyzes the hydrolysis of the adenine ring of phosphoribosyl-AMP. This is Phosphoribosyl-AMP cyclohydrolase from Mycobacterium ulcerans (strain Agy99).